The sequence spans 421 residues: ATP-dependent RNA helicase RhlB (421 aa).

The short motif at 9 to 37 is the Q motif element; that stretch reads QKFSDFALHPKVVEALEKKGFHNCTPIQA. Positions 40–219 constitute a Helicase ATP-binding domain; sequence LPLTLAGRDV…FEQMNNAEYI (180 aa). 53–60 lines the ATP pocket; that stretch reads AQTGTGKT. The DEAD box signature appears at 165 to 168; sequence DEAD. The Helicase C-terminal domain maps to 245-390; sequence RLLQTLIEEE…VSKYNPDALM (146 aa). The disordered stretch occupies residues 392 to 421; sequence DLPKPLRLTRPRTGNGPRRTGAPRNRRRSG. Low complexity predominate over residues 402 to 414; it reads PRTGNGPRRTGAP.

Belongs to the DEAD box helicase family. RhlB subfamily. In terms of assembly, component of the RNA degradosome, which is a multiprotein complex involved in RNA processing and mRNA degradation.

It is found in the cytoplasm. It carries out the reaction ATP + H2O = ADP + phosphate + H(+). In terms of biological role, DEAD-box RNA helicase involved in RNA degradation. Has RNA-dependent ATPase activity and unwinds double-stranded RNA. This is ATP-dependent RNA helicase RhlB from Escherichia fergusonii (strain ATCC 35469 / DSM 13698 / CCUG 18766 / IAM 14443 / JCM 21226 / LMG 7866 / NBRC 102419 / NCTC 12128 / CDC 0568-73).